The chain runs to 124 residues: Fluoride-specific ion channel FluC 2 (124 aa).

Helical transmembrane passes span Leu8 to Val28, Asn34 to Phe54, Leu60 to Cys80, and Leu93 to Ile113. Na(+) is bound by residues Gly68 and Thr71.

This sequence belongs to the fluoride channel Fluc/FEX (TC 1.A.43) family.

The protein localises to the cell inner membrane. It catalyses the reaction fluoride(in) = fluoride(out). Na(+) is not transported, but it plays an essential structural role and its presence is essential for fluoride channel function. In terms of biological role, fluoride-specific ion channel. Important for reducing fluoride concentration in the cell, thus reducing its toxicity. The polypeptide is Fluoride-specific ion channel FluC 2 (Prochlorococcus marinus (strain MIT 9313)).